We begin with the raw amino-acid sequence, 262 residues long: Type III pantothenate kinase (262 aa).

Asp5–Lys12 contacts ATP. Substrate-binding positions include Tyr102 and Gly110–Arg113. The active-site Proton acceptor is Asp112. Residue Asp132 participates in K(+) binding. Residue Thr135 participates in ATP binding. Thr190 is a binding site for substrate.

Belongs to the type III pantothenate kinase family. In terms of assembly, homodimer. Requires NH4(+) as cofactor. It depends on K(+) as a cofactor.

Its subcellular location is the cytoplasm. The enzyme catalyses (R)-pantothenate + ATP = (R)-4'-phosphopantothenate + ADP + H(+). The protein operates within cofactor biosynthesis; coenzyme A biosynthesis; CoA from (R)-pantothenate: step 1/5. Catalyzes the phosphorylation of pantothenate (Pan), the first step in CoA biosynthesis. This chain is Type III pantothenate kinase, found in Idiomarina loihiensis (strain ATCC BAA-735 / DSM 15497 / L2-TR).